The chain runs to 118 residues: Beta-2-microglobulin (118 aa).

The first 20 residues, 1 to 20 (MARFVALVLLGLLSLSGLDA), serve as a signal peptide directing secretion. The region spanning 25-112 (PKIQVYSRHP…HVTLEQPRIV (88 aa)) is the Ig-like C1-type domain. Residues Cys45 and Cys99 are joined by a disulfide bond.

It belongs to the beta-2-microglobulin family. Heterodimer of an alpha chain and a beta chain. Beta-2-microglobulin is the beta-chain of major histocompatibility complex class I molecules. Forms a heterotrimer with MR1 and a metabolite antigen.

The protein resides in the secreted. Component of the class I major histocompatibility complex (MHC). Involved in the presentation of peptide antigens to the immune system. The protein is Beta-2-microglobulin (B2M) of Bos taurus (Bovine).